Consider the following 2544-residue polypeptide: DNA polymerase theta (2544 aa).

Positions M1–S13 are enriched in basic residues. The disordered stretch occupies residues M1 to K57. Residues S14–S29 are compositionally biased toward low complexity. ATP-binding positions include Q95 and A114–T121. The region spanning L101–D285 is the Helicase ATP-binding domain. Residues L101–A551 form a helicase activity region. Positions D215–H218 match the DEAH box motif. Positions G320–A551 constitute a Helicase C-terminal domain. The segment at D844 to M890 is interaction with RAD51. The interval P896 to D955 is disordered. Positions S898 to S911 are enriched in low complexity. Over residues G933–K945 the composition is skewed to polar residues. Residues P946–D955 show a composition bias toward basic and acidic residues. K983 carries the N6-acetyllysine modification. Residues L1022–P1034 are compositionally biased toward polar residues. 2 disordered regions span residues L1022–R1058 and V1128–L1167. The span at V1128 to A1139 shows a compositional bias: low complexity. Residues A1140–N1155 show a composition bias toward basic and acidic residues. S1265 carries the post-translational modification Phosphoserine. Disordered stretches follow at residues G1266–A1288 and Q1331–D1353. A phosphoserine mark is found at S1438, S1442, S1444, and S1449. Residues F1478–Q1501 are disordered. Residues P1492 to Q1501 are compositionally biased toward polar residues. Phosphoserine occurs at positions 1511, 1519, 1585, and 1592. The interval E1557–A1591 is disordered. Positions T1578–A1591 are enriched in polar residues. 2 stretches are compositionally biased toward basic and acidic residues: residues V1606–K1616 and N1628–I1638. Positions V1606–A1697 are disordered. Residues D1641–P1652 are compositionally biased toward polar residues. A compositionally biased stretch (basic and acidic residues) spans V1656–A1667. Phosphothreonine is present on T1710. The segment at A2052 to E2538 is DNA polymerase activity. Loop regions lie at residues K2097–F2132 and E2212–P2276. The span at M2104–R2117 shows a compositional bias: polar residues. A disordered region spans residues M2104 to R2124. D2284 functions as the For DNA polymerase activity in the catalytic mechanism. Residues D2284 and Y2285 each contribute to the Mg(2+) site. The tract at residues Q2445–I2489 is loop 3. D2494 provides a ligand contact to Mg(2+).

Belongs to the DNA polymerase type-A family. As to quaternary structure, homomultimer; forms homodimers and homotetramers. Interacts with RAD51. Interacts with ORC2 and ORC4. Interacts with RHNO1; interaction takes place during mitosis and promotes POLQ recruitment to DNA damage sites. Interacts (when phosphorylated) with TOPBP1 (via BRCT domains 7 and 8); promoting POLQ recruitment to DNA damage sites. The cofactor is Mg(2+). Post-translationally, phosphorylated by PLK1; promoting interaction with TOPBP1 and recruitment to DNA damage sites.

It is found in the nucleus. Its subcellular location is the chromosome. It catalyses the reaction DNA(n) + a 2'-deoxyribonucleoside 5'-triphosphate = DNA(n+1) + diphosphate. The catalysed reaction is ATP + H2O = ADP + phosphate + H(+). Functionally, low-fidelity DNA polymerase with a helicase activity that promotes microhomology-mediated end-joining (MMEJ), an alternative non-homologous end-joining (NHEJ) machinery required to repair double-strand breaks in DNA during mitosis. MMEJ is an error-prone repair pathway that produces deletions of sequences from the strand being repaired and promotes genomic rearrangements, such as telomere fusions, some of them leading to cellular transformation. MMEJ is required during mitosis to repair persistent double-strand breaks that originate in S-phase. Although error-prone, MMEJ protects against chromosomal instability and tumorigenesis. The polymerase acts by binding directly the 2 ends of resected double-strand breaks, allowing microhomologous sequences in the overhangs to form base pairs. It then extends each strand from the base-paired region using the opposing overhang as a template. Requires partially resected DNA containing 2 to 6 base pairs of microhomology to perform MMEJ. The polymerase lacks proofreading activity and is highly promiscuous: unlike most polymerases, promotes extension of ssDNA and partial ssDNA (pssDNA) substrates. When the ends of a break do not contain terminal microhomology must identify embedded complementary sequences through a scanning step. Also acts as a DNA helicase, promoting dissociation of the replication protein A complex (RPA/RP-A), composed of RPA1, RPA2 and RPA3, from resected double-strand breaks to allow their annealing and subsequent joining by MMEJ. Removal of RPA/RP-A complex proteins prevents RAD51 accumulation at resected ends, thereby inhibiting homology-recombination repair (HR) pathway. Also shows RNA-directed DNA polymerase activity to mediate DNA repair in vitro; however this activity needs additional evidence in vivo. May also have lyase activity. Involved in somatic hypermutation of immunoglobulin genes, a process that requires the activity of DNA polymerases to ultimately introduce mutations at both A/T and C/G base pairs. However, POLQ does not play a major role in somatic hypermutation. POLQ-mediated end joining activity is involved in random integration of exogenous DNA hampers. This is DNA polymerase theta from Mus musculus (Mouse).